The chain runs to 1561 residues: ABC-type transporter phomO' (1561 aa).

A run of 7 helical transmembrane segments spans residues 34 to 54, 110 to 130, 139 to 159, 172 to 192, 202 to 222, 314 to 334, and 358 to 378; these read LYFE…LLAA, CTAG…CTTV, SVPA…LAHF, SSSL…APLV, GSAL…LIAV, LGLY…FTLA, and GLIG…GWYW. Residues 326–599 enclose the ABC transmembrane type-1 1 domain; the sequence is LCLAGFTLAQ…LLQIIPSFGA (274 aa). A glycan (N-linked (GlcNAc...) asparagine) is linked at N384. 4 consecutive transmembrane segments (helical) span residues 428 to 448, 452 to 472, 535 to 555, and 577 to 597; these read LAYA…TWML, VGPP…TSTY, LIVG…VLVF, and LIWI…IPSF. The ABC transporter 1 domain maps to 645 to 871; sequence IHNSSFSYTD…VEDENGDVDN (227 aa). N647 carries an N-linked (GlcNAc...) asparagine glycan. 678 to 685 is a binding site for ATP; the sequence is GPAGCGKS. The N-linked (GlcNAc...) asparagine glycan is linked to N721. The tract at residues 853–899 is disordered; the sequence is YQFPPSQADVEDENGDVDNGAENTRPRESSHTTEAQSGPPEPKSKPT. 4 helical membrane passes run 913 to 933, 969 to 989, 1037 to 1054, and 1147 to 1167; these read SIGF…AFCL, VLPL…IVPL, LFNT…VILI, and LVLN…AVGL. The region spanning 920 to 1209 is the ABC transmembrane type-1 2 domain; it reads VLFIGGGIIF…LLTAWTSLET (290 aa). N1189 is a glycosylation site (N-linked (GlcNAc...) asparagine). The segment covering 1229–1238 has biased composition (basic and acidic residues); that stretch reads DVLVRPDSLD. The segment at 1229–1298 is disordered; that stretch reads DVLVRPDSLD…DVAADGEKHE (70 aa). Over residues 1269–1280 the composition is skewed to acidic residues; the sequence is YDDDDESDENTD. The ABC transporter 2 domain occupies 1297-1545; it reads HEATTITTTS…SDIFAFFGRS (249 aa). 1333-1340 contributes to the ATP binding site; the sequence is GRTGSGKS. Residue N1496 is glycosylated (N-linked (GlcNAc...) asparagine).

This sequence belongs to the ABC transporter superfamily. ABCC family. Conjugate transporter (TC 3.A.1.208) subfamily.

Its subcellular location is the membrane. Its function is as follows. ABC-type transporter; part of the gene cluster that mediates the biosynthesis of the phomopsins, a group of hexapeptide mycotoxins which infects lupins and causes lupinosis disease in livestock. In Diaporthe leptostromiformis (Lupinosis disease fungus), this protein is ABC-type transporter phomO'.